The chain runs to 1428 residues: DNA topoisomerase 2 (1428 aa).

ATP-binding positions include N70, N99, 127 to 129 (SSN), and 140 to 147 (GRNGYGAK). Residues 333–336 (KKKK) form an interaction with DNA region. 365-367 (QTK) contacts ATP. Positions 443–557 (CTLVLTEGDS…GLLDIQGFLL (115 aa)) constitute a Toprim domain. Residues E449, D526, and D528 each contribute to the Mg(2+) site. A Topo IIA-type catalytic domain is found at 692–1159 (IPNVLDGFKP…SAKDIWNTDL (468 aa)). Catalysis depends on Y782, which acts as the O-(5'-phospho-DNA)-tyrosine intermediate. The segment at 965 to 974 (KLISPISLMN) is interaction with DNA. 4 disordered regions span residues 1083 to 1102 (KGATSDEEDEESSHEDTENV), 1176 to 1217 (ARGG…RKGK), 1240 to 1288 (KAPT…ELSK), and 1303 to 1428 (MGST…NEED). T1086 is subject to Phosphothreonine; by CK2. A Phosphoserine; by CK2 modification is found at S1087. Residues 1207–1217 (KNKKSTARKGK) are compositionally biased toward basic residues. S1252 is modified (phosphoserine). Position 1258 is a phosphothreonine; by CK2 (T1258). S1266, S1269, and S1272 each carry phosphoserine; by CK2. A compositionally biased stretch (basic and acidic residues) spans 1275–1286 (DIKKEDKDEGEL). Basic residues predominate over residues 1332–1347 (TAVKPKLAKKPVRKQQ). Residues S1353, S1356, S1408, and S1423 each carry the phosphoserine; by CK2 modification. A compositionally biased stretch (acidic residues) spans 1403-1428 (ELSDDSFIEDDEEENQGSDVSFNEED).

The protein belongs to the type II topoisomerase family. In terms of assembly, homodimer. Mg(2+) is required as a cofactor. The cofactor is Mn(2+). Requires Ca(2+) as cofactor. Post-translationally, phosphorylation enhances the activity. Stimulates decatenation activity.

It localises to the nucleus. It carries out the reaction ATP-dependent breakage, passage and rejoining of double-stranded DNA.. In terms of biological role, control of topological states of DNA by transient breakage and subsequent rejoining of DNA strands. Topoisomerase II makes double-strand breaks. Essential during mitosis and meiosis for proper segregation of daughter chromosomes. The polypeptide is DNA topoisomerase 2 (TOP2) (Saccharomyces cerevisiae (strain ATCC 204508 / S288c) (Baker's yeast)).